The chain runs to 968 residues: RNA polymerase-associated protein RapA (968 aa).

Positions 163–332 (EVGQRFAPRV…FARLRLLDPD (170 aa)) constitute a Helicase ATP-binding domain. 176-183 (DEVGLGKT) lines the ATP pocket. The DEAH box motif lies at 278 to 281 (DEAH). Residues 491 to 678 (RVDWLIDFLK…GTKARYQELK (188 aa)) enclose the Helicase C-terminal domain.

The protein belongs to the SNF2/RAD54 helicase family. RapA subfamily. As to quaternary structure, interacts with the RNAP. Has a higher affinity for the core RNAP than for the holoenzyme. Its ATPase activity is stimulated by binding to RNAP.

Functionally, transcription regulator that activates transcription by stimulating RNA polymerase (RNAP) recycling in case of stress conditions such as supercoiled DNA or high salt concentrations. Probably acts by releasing the RNAP, when it is trapped or immobilized on tightly supercoiled DNA. Does not activate transcription on linear DNA. Probably not involved in DNA repair. The chain is RNA polymerase-associated protein RapA from Shewanella pealeana (strain ATCC 700345 / ANG-SQ1).